Reading from the N-terminus, the 243-residue chain is DNA repair protein RecO (243 aa).

It belongs to the RecO family.

Involved in DNA repair and RecF pathway recombination. This Azoarcus sp. (strain BH72) protein is DNA repair protein RecO.